The chain runs to 494 residues: ATP synthase subunit beta, chloroplastic (494 aa).

172–179 (GGAGVGKT) contacts ATP.

Belongs to the ATPase alpha/beta chains family. In terms of assembly, F-type ATPases have 2 components, CF(1) - the catalytic core - and CF(0) - the membrane proton channel. CF(1) has five subunits: alpha(3), beta(3), gamma(1), delta(1), epsilon(1). CF(0) has four main subunits: a(1), b(1), b'(1) and c(9-12).

It localises to the plastid. Its subcellular location is the chloroplast thylakoid membrane. The catalysed reaction is ATP + H2O + 4 H(+)(in) = ADP + phosphate + 5 H(+)(out). Its function is as follows. Produces ATP from ADP in the presence of a proton gradient across the membrane. The catalytic sites are hosted primarily by the beta subunits. The polypeptide is ATP synthase subunit beta, chloroplastic (Physcomitrium patens (Spreading-leaved earth moss)).